Reading from the N-terminus, the 414-residue chain is Inositol-tetrakisphosphate 1-kinase (414 aa).

1D-myo-inositol 1,3,4-trisphosphate is bound at residue Lys18. Residues Arg106 and Lys157 each coordinate ATP. The ATP-grasp domain maps to Glu117–Thr325. 1D-myo-inositol 1,3,4-trisphosphate is bound by residues His167 and Lys199. ATP is bound by residues Gln188–Lys199, Ser214, Ser232, and Ser236. The Mg(2+) site is built by Asp281, Asp295, and Asn297. Asn297 serves as a coordination point for 1D-myo-inositol 1,3,4-trisphosphate. Residues Lys340 and Lys383 each carry the N6-acetyllysine; by EP300 and CREBBP modification. Ser396 carries the phosphoserine modification. At Lys410 the chain carries N6-acetyllysine; by EP300 and CREBBP.

The protein belongs to the ITPK1 family. As to quaternary structure, monomer. Interacts with GPS1/COPS1. It depends on Mg(2+) as a cofactor. Acetylation by EP300 and CREBBP destabilizes ITPK1, and down-regulates enzymatic activity. Deacetylated by SIRT1. As to expression, expressed in brain &gt; heart &gt; skeletal muscle = kidney = pancreas = liver = placenta &gt; lung. In brain, it is expressed in cerebellum, cerebral cortex, medulla, spinal cord, occipital lobe, frontal lobe, temporal lobe and putamen.

The enzyme catalyses 1D-myo-inositol 3,4,5,6-tetrakisphosphate + ATP = 1D-myo-inositol 1,3,4,5,6-pentakisphosphate + ADP + H(+). The catalysed reaction is 1D-myo-inositol 1,3,4-trisphosphate + ATP = 1D-myo-inositol 1,3,4,5-tetrakisphosphate + ADP + H(+). It catalyses the reaction 1D-myo-inositol 1,3,4-trisphosphate + ATP = 1D-myo-inositol 1,3,4,6-tetrakisphosphate + ADP + H(+). It carries out the reaction 1D-myo-inositol 3,4,6-trisphosphate + ATP = 1D-myo-inositol 1,3,4,6-tetrakisphosphate + ADP + H(+). The enzyme catalyses 1D-myo-inositol 1,3,4-trisphosphate + 1D-myo-inositol 1,3,4,5,6-pentakisphosphate = 1D-myo-inositol 3,4,5,6-tetrakisphosphate + 1D-myo-inositol 1,3,4,6-tetrakisphosphate. The catalysed reaction is 1D-myo-inositol 1,3,4-trisphosphate + 1D-myo-inositol 1,3,4,5,6-pentakisphosphate = 1D-myo-inositol 3,4,5,6-tetrakisphosphate + 1D-myo-inositol 1,3,4,5-tetrakisphosphate. In terms of biological role, kinase that can phosphorylate various inositol polyphosphate such as Ins(3,4,5,6)P4 or Ins(1,3,4)P3. Phosphorylates Ins(3,4,5,6)P4 at position 1 to form Ins(1,3,4,5,6)P5. This reaction is thought to have regulatory importance, since Ins(3,4,5,6)P4 is an inhibitor of plasma membrane Ca(2+)-activated Cl(-) channels, while Ins(1,3,4,5,6)P5 is not. Also phosphorylates Ins(1,3,4)P3 on O-5 and O-6 to form Ins(1,3,4,6)P4, an essential molecule in the hexakisphosphate (InsP6) pathway. Also acts as an inositol polyphosphate phosphatase that dephosphorylates Ins(1,3,4,5)P4 and Ins(1,3,4,6)P4 to Ins(1,3,4)P3, and Ins(1,3,4,5,6)P5 to Ins(3,4,5,6)P4. May also act as an isomerase that interconverts the inositol tetrakisphosphate isomers Ins(1,3,4,5)P4 and Ins(1,3,4,6)P4 in the presence of ADP and magnesium. Probably acts as the rate-limiting enzyme of the InsP6 pathway. Modifies TNF-alpha-induced apoptosis by interfering with the activation of TNFRSF1A-associated death domain. Plays an important role in MLKL-mediated necroptosis. Produces highly phosphorylated inositol phosphates such as inositolhexakisphosphate (InsP6) which bind to MLKL mediating the release of an N-terminal auto-inhibitory region leading to its activation. Essential for activated phospho-MLKL to oligomerize and localize to the cell membrane during necroptosis. This Homo sapiens (Human) protein is Inositol-tetrakisphosphate 1-kinase.